The chain runs to 435 residues: E3 ubiquitin-protein ligase PUB22 (435 aa).

In terms of domain architecture, U-box spans 6 to 81 (EIPSFFLCPI…QSWCTLNASY (76 aa)).

Interacts with RPN12A. Binds to EXO70B2. Post-translationally, auto-ubiquitinated leading to degradation via the 26S proteasome. This Auto-ubiquitination is repressed by the bacterial elicitor flg22 thus leading to a transiently increased protein stabilization and accumulation.

Its subcellular location is the cytoplasm. The catalysed reaction is S-ubiquitinyl-[E2 ubiquitin-conjugating enzyme]-L-cysteine + [acceptor protein]-L-lysine = [E2 ubiquitin-conjugating enzyme]-L-cysteine + N(6)-ubiquitinyl-[acceptor protein]-L-lysine.. It participates in protein modification; protein ubiquitination. Its function is as follows. E3 ubiquitin-protein ligase that negatively regulates water stress response. May control in coordination with PUB23 a drought signaling pathway by ubiquitinating cytosolic RPN12a. Acts as a negative regulator of the immunity triggered by the pathogen-associated molecular patterns (PAMPs), in association with PUB23 and PUB24. Regulates EXO70B2 ubiquitination and degradation via the 26S proteasome to attenuate PAMP-induced signaling. In Arabidopsis thaliana (Mouse-ear cress), this protein is E3 ubiquitin-protein ligase PUB22.